We begin with the raw amino-acid sequence, 83 residues long: Putative beta-neurotoxin RjAa10f (83 aa).

The first 18 residues, 1–18, serve as a signal peptide directing secretion; that stretch reads MKILIFIIASFMLIGVWC. Positions 19–82 constitute an LCN-type CS-alpha/beta domain; that stretch reads KEGYPMGRDG…VWDPNNNKCV (64 aa). 4 disulfide bridges follow: Cys-29–Cys-81, Cys-33–Cys-55, Cys-40–Cys-62, and Cys-44–Cys-64.

This sequence belongs to the long (4 C-C) scorpion toxin superfamily. Sodium channel inhibitor family. Beta subfamily. In terms of tissue distribution, expressed by the venom gland.

It localises to the secreted. Functionally, beta toxins bind voltage-independently at site-4 of sodium channels (Nav) and shift the voltage of activation toward more negative potentials thereby affecting sodium channel activation and promoting spontaneous and repetitive firing. The chain is Putative beta-neurotoxin RjAa10f from Rhopalurus junceus (Caribbean blue scorpion).